The chain runs to 518 residues: MIPDVSQALAWLEKHPQALKGIQRGLERETLRVNADGTLATTGHPEALGSALTHKWITTDFAEALLEFITPVDGDIEHMLTFMRDLHRYTARNMGDERMWPLSMPCYIAEGQDIELAQYGTSNTGRFKTLYREGLKNRYGALMQTISGVHYNFSLPMAFWQAKCGDISGADAKEKISAGYFRVIRNYYRFGWVIPYLFGASPAICSSFLQGKPTSLPFEKTECGMYYLPYATSLRLSDLGYTNKSQSNLGITFNDLYEYVAGLKQAIKTPSEEYAKIGIEKDGKRLQINSNVLQIENELYAPIRPKRVTRSGESPSDALLRGGIEYIEVRSLDINPFSPIGVDEQQVRFLDLFMVWCALADAPEMSSSELACTRVNWNRVILEGRKPGLTLGIGCETAQFPLPQVGKDLFRDLKRVAQTLDSINGGEAYQKVCDELVACFDNPDLTFSARILRSMIDTGIGGTGKAFAEAYRNLLREEPLEILREEDFVAEREASVRRQQEMEAADTEPFAVWLEKHA.

Belongs to the glutamate--cysteine ligase type 1 family. Type 1 subfamily.

The catalysed reaction is L-cysteine + L-glutamate + ATP = gamma-L-glutamyl-L-cysteine + ADP + phosphate + H(+). It functions in the pathway sulfur metabolism; glutathione biosynthesis; glutathione from L-cysteine and L-glutamate: step 1/2. This is Glutamate--cysteine ligase from Escherichia fergusonii (strain ATCC 35469 / DSM 13698 / CCUG 18766 / IAM 14443 / JCM 21226 / LMG 7866 / NBRC 102419 / NCTC 12128 / CDC 0568-73).